The following is a 286-amino-acid chain: 3-hydroxyanthranilate 3,4-dioxygenase (286 aa).

Residues 1–160 are domain A (catalytic); the sequence is MERRVRVKSW…SEQYRTGKPN (160 aa). Arg43 lines the O2 pocket. His47, Glu53, and His91 together coordinate Fe cation. Glu53 is a substrate binding site. Arg95 and Glu105 together coordinate substrate. The segment at 161 to 177 is linker; it reads PDQLLKELPFPLNTRSI. The interval 178 to 286 is domain B; the sequence is MKPMSLKAWL…QDPARKKPWW (109 aa).

It belongs to the 3-HAO family. Monomer. The cofactor is Fe(2+).

It is found in the cytoplasm. The protein resides in the cytosol. The enzyme catalyses 3-hydroxyanthranilate + O2 = (2Z,4Z)-2-amino-3-carboxymuconate 6-semialdehyde. It participates in cofactor biosynthesis; NAD(+) biosynthesis; quinolinate from L-kynurenine: step 3/3. In terms of biological role, catalyzes the oxidative ring opening of 3-hydroxyanthranilate to 2-amino-3-carboxymuconate semialdehyde, which spontaneously cyclizes to quinolinate. The chain is 3-hydroxyanthranilate 3,4-dioxygenase (Haao) from Mus musculus (Mouse).